Here is a 53-residue protein sequence, read N- to C-terminus: Conotoxin Vc5.3 (53 aa).

An N-terminal signal peptide occupies residues 1 to 15 (VILLLLTASAPSVDA). A propeptide spanning residues 16-41 (RPKTEDVPLSSFRDNTKSTLQRLLKR) is cleaved from the precursor.

This sequence belongs to the conotoxin T superfamily. In terms of processing, contains 2 disulfide bonds that can be either 'C1-C3, C2-C4' or 'C1-C4, C2-C3', since these disulfide connectivities have been observed for conotoxins with cysteine framework V (for examples, see AC P0DQQ7 and AC P81755). As to expression, expressed by the venom duct.

Its subcellular location is the secreted. In Conus victoriae (Queen Victoria cone), this protein is Conotoxin Vc5.3.